Here is a 214-residue protein sequence, read N- to C-terminus: Octanoyltransferase (214 aa).

The BPL/LPL catalytic domain maps to 35–211; the sequence is KSNIDFIWLG…IIQEEFYFNF (177 aa). Residues 75–82, 142–144, and 155–157 contribute to the substrate site; these read RGGEVTCH, SIG, and GFS. Catalysis depends on cysteine 173, which acts as the Acyl-thioester intermediate.

Belongs to the LipB family.

It is found in the cytoplasm. The enzyme catalyses octanoyl-[ACP] + L-lysyl-[protein] = N(6)-octanoyl-L-lysyl-[protein] + holo-[ACP] + H(+). The protein operates within protein modification; protein lipoylation via endogenous pathway; protein N(6)-(lipoyl)lysine from octanoyl-[acyl-carrier-protein]: step 1/2. Functionally, catalyzes the transfer of endogenously produced octanoic acid from octanoyl-acyl-carrier-protein onto the lipoyl domains of lipoate-dependent enzymes. Lipoyl-ACP can also act as a substrate although octanoyl-ACP is likely to be the physiological substrate. The polypeptide is Octanoyltransferase (Prochlorococcus marinus (strain MIT 9515)).